A 227-amino-acid chain; its full sequence is MMKAFFIAGTDTDVGKTVASKAILHALAAKDLRTIGYKPVAAGSDKTPEGWRNSDALHLQKAATVAVDYEDINPYALELPASPHIAAKHEKVEIDYAVLSRKLAQHKENADVVLVEGAGGWRVPVSDTDSLSTWVKQEDLPVVLVVGIKLGCLSHALLTAEVIKADGLNLVGWVANRVNPGTEHYAEIIDMLEERLEVPKLGEIPYIPSAKRKDLGKYINADVLLEL.

Aspartate 13–valine 18 is a binding site for ATP. A Mg(2+)-binding site is contributed by threonine 17. Lysine 38 is an active-site residue. Residues aspartate 55, glutamate 116–glycine 119, asparagine 176–arginine 177, and proline 205–isoleucine 207 each bind ATP. Residues aspartate 55 and glutamate 116 each coordinate Mg(2+).

This sequence belongs to the dethiobiotin synthetase family. Homodimer. The cofactor is Mg(2+).

Its subcellular location is the cytoplasm. The enzyme catalyses (7R,8S)-7,8-diammoniononanoate + CO2 + ATP = (4R,5S)-dethiobiotin + ADP + phosphate + 3 H(+). It functions in the pathway cofactor biosynthesis; biotin biosynthesis; biotin from 7,8-diaminononanoate: step 1/2. Catalyzes a mechanistically unusual reaction, the ATP-dependent insertion of CO2 between the N7 and N8 nitrogen atoms of 7,8-diaminopelargonic acid (DAPA, also called 7,8-diammoniononanoate) to form a ureido ring. This is ATP-dependent dethiobiotin synthetase BioD from Vibrio vulnificus (strain CMCP6).